Here is a 353-residue protein sequence, read N- to C-terminus: DNA polymerase IV (353 aa).

Residues 6 to 187 (IIHIDCDCFY…LPVTKLHGVG (182 aa)) form the UmuC domain. 2 residues coordinate Mg(2+): Asp10 and Asp105. Glu106 is a catalytic residue.

It belongs to the DNA polymerase type-Y family. Monomer. Mg(2+) is required as a cofactor.

The protein resides in the cytoplasm. It carries out the reaction DNA(n) + a 2'-deoxyribonucleoside 5'-triphosphate = DNA(n+1) + diphosphate. Poorly processive, error-prone DNA polymerase involved in untargeted mutagenesis. Copies undamaged DNA at stalled replication forks, which arise in vivo from mismatched or misaligned primer ends. These misaligned primers can be extended by PolIV. Exhibits no 3'-5' exonuclease (proofreading) activity. May be involved in translesional synthesis, in conjunction with the beta clamp from PolIII. The polypeptide is DNA polymerase IV (Pseudomonas syringae pv. tomato (strain ATCC BAA-871 / DC3000)).